Consider the following 363-residue polypeptide: 3-dehydroquinate synthase (363 aa).

NAD(+)-binding positions include 103 to 107 (GAVGD), 127 to 128 (TT), K139, K148, and 166 to 169 (FSET). The Zn(2+) site is built by E181, H243, and H260.

Belongs to the sugar phosphate cyclases superfamily. Dehydroquinate synthase family. Requires Co(2+) as cofactor. Zn(2+) serves as cofactor. The cofactor is NAD(+).

It localises to the cytoplasm. It carries out the reaction 7-phospho-2-dehydro-3-deoxy-D-arabino-heptonate = 3-dehydroquinate + phosphate. It participates in metabolic intermediate biosynthesis; chorismate biosynthesis; chorismate from D-erythrose 4-phosphate and phosphoenolpyruvate: step 2/7. Catalyzes the conversion of 3-deoxy-D-arabino-heptulosonate 7-phosphate (DAHP) to dehydroquinate (DHQ). The polypeptide is 3-dehydroquinate synthase (Lysinibacillus sphaericus (strain C3-41)).